The following is a 194-amino-acid chain: Adenylate kinase isoenzyme 1 (194 aa).

Methionine 1 is modified (N-acetylmethionine). 18 to 23 is an ATP binding site; sequence GSGKGT. Serine 38 bears the Phosphoserine mark. Positions 38–67 are NMP; the sequence is STGDLLRSEVSSGSARGKKLSEIMEKGQLV. Residues threonine 39, arginine 44, 65 to 67, 94 to 97, and glutamine 101 each bind AMP; these read QLV and GYPR. The segment at 131–141 is LID; it reads KRGETSGRVDD. Position 132 (arginine 132) interacts with ATP. Positions 138 and 149 each coordinate AMP. Glycine 177 is a binding site for ATP.

Belongs to the adenylate kinase family. AK1 subfamily. As to quaternary structure, monomer. Requires Mg(2+) as cofactor.

It localises to the cytoplasm. The catalysed reaction is a ribonucleoside 5'-phosphate + ATP = a ribonucleoside 5'-diphosphate + ADP. The enzyme catalyses AMP + ATP = 2 ADP. It carries out the reaction dAMP + ATP = dADP + ADP. It catalyses the reaction dATP + AMP = dADP + ADP. The catalysed reaction is dAMP + dATP = 2 dADP. The enzyme catalyses a 2'-deoxyribonucleoside 5'-diphosphate + ATP = a 2'-deoxyribonucleoside 5'-triphosphate + ADP. It carries out the reaction a ribonucleoside 5'-diphosphate + ATP = a ribonucleoside 5'-triphosphate + ADP. It catalyses the reaction CDP + GTP = CTP + GDP. The catalysed reaction is GDP + ATP = GTP + ADP. The enzyme catalyses UDP + ATP = UTP + ADP. It carries out the reaction GTP + UDP = UTP + GDP. It catalyses the reaction dTDP + GTP = dTTP + GDP. The catalysed reaction is dCDP + GTP = dCTP + GDP. The enzyme catalyses dGDP + ATP = dGTP + ADP. It carries out the reaction dADP + GTP = dATP + GDP. It catalyses the reaction thiamine diphosphate + ADP = thiamine triphosphate + AMP. Functionally, catalyzes the reversible transfer of the terminal phosphate group between ATP and AMP. Also displays broad nucleoside diphosphate kinase activity. Plays an important role in cellular energy homeostasis and in adenine nucleotide metabolism. Also catalyzes at a very low rate the synthesis of thiamine triphosphate (ThTP) from thiamine diphosphate (ThDP) and ADP. This chain is Adenylate kinase isoenzyme 1, found in Homo sapiens (Human).